The primary structure comprises 210 residues: UPF0173 protein PYRAB01190 (210 aa).

It belongs to the UPF0173 family.

The sequence is that of UPF0173 protein PYRAB01190 from Pyrococcus abyssi (strain GE5 / Orsay).